The following is a 525-amino-acid chain: MAGRWTSLVDEAAAPWLPRGGLGSAIARHDFRRLRAVAAVSLTALPIVPLALTLALPVSAALPAGAALWASASLLAAAAAIAGGREFPTDGEVEFAPAPELPDLNAAYDLFAGLVTVHDTRGHVLSVHGRDASEYLKLMRDPHGRGFIEQIHVSDRIAFLRAIDSLRLDSERSAVDIRLERTSADGPQFAHIYCEMTPLRDAEGNLLAIVAQSRDVSEEARLQAEAAAKAAHAESANDAKTRFLAAVSHELRTPLNAILGFSDVLAGEYFGKLENDRQREYVSLIHQSGTHLLSVVNTMLDMSKIEAGRYELLLEPFRVAEAIAACEAMLSHQAREKGVRLTSRVTRSVGEINADQRAFQQILINLIGNAIKFTDRGGLVTVDAALEGNMLKLTVSDTGIGIAADKLQMLGQPFVQIQNDYTRRYEGTGLGLSLVKGLAELHGGDVSIRSAEGEGTVIVVTIPSDASGAAERQCADAPVTVEFPPRLKQHADGKREAGVPALSEALHTGEIGREGGHGAAQAKTA.

2 helical membrane-spanning segments follow: residues Ala36 to Leu56 and Ala61 to Ile81. Positions Ser173–Ala228 constitute a PAC domain. The Histidine kinase domain occupies Ala246 to Ala466. His249 bears the Phosphohistidine; by autocatalysis mark. Residues Leu506–Ala525 are disordered.

The protein localises to the cell membrane. It carries out the reaction ATP + protein L-histidine = ADP + protein N-phospho-L-histidine.. This is an uncharacterized protein from Rhizobium meliloti (strain 1021) (Ensifer meliloti).